A 434-amino-acid chain; its full sequence is Trigger factor (434 aa).

One can recognise a PPIase FKBP-type domain in the interval 161-246 (EDRVTVDFTG…LKKVEQRELP (86 aa)).

The protein belongs to the FKBP-type PPIase family. Tig subfamily.

It is found in the cytoplasm. The enzyme catalyses [protein]-peptidylproline (omega=180) = [protein]-peptidylproline (omega=0). Its function is as follows. Involved in protein export. Acts as a chaperone by maintaining the newly synthesized protein in an open conformation. Functions as a peptidyl-prolyl cis-trans isomerase. This chain is Trigger factor, found in Sodalis glossinidius (strain morsitans).